The primary structure comprises 82 residues: Omega-conotoxin-like TxMKLT1-031 (82 aa).

A signal peptide spans 1–22; that stretch reads MKLTCMMIVAVLFLTAWTLVMA. Residues 23-49 constitute a propeptide that is removed on maturation; the sequence is DDSNNGLANLFSKSRDEMEDPEASKLE. 3 disulfides stabilise this stretch: Cys53–Cys71, Cys60–Cys76, and Cys70–Cys81.

Belongs to the conotoxin O1 superfamily. As to expression, expressed by the venom duct.

The protein resides in the secreted. Omega-conotoxins act at presynaptic membranes, they bind and block voltage-gated calcium channels (Cav). The polypeptide is Omega-conotoxin-like TxMKLT1-031 (Conus textile (Cloth-of-gold cone)).